A 151-amino-acid chain; its full sequence is Cytochrome c-type biogenesis protein CcmE (151 aa).

Residues 1-8 (MNPLRKKR) lie on the Cytoplasmic side of the membrane. Residues 9 to 29 (LLIILAILVGVGIAVGLALSA) form a helical; Signal-anchor for type II membrane protein membrane-spanning segment. At 30-151 (LKENINLFYT…QSAPTPAKEG (122 aa)) the chain is on the periplasmic side. 2 residues coordinate heme: histidine 124 and tyrosine 128. The tract at residues 131–151 (PEVTKALKDSGQSAPTPAKEG) is disordered.

This sequence belongs to the CcmE/CycJ family.

It is found in the cell inner membrane. In terms of biological role, heme chaperone required for the biogenesis of c-type cytochromes. Transiently binds heme delivered by CcmC and transfers the heme to apo-cytochromes in a process facilitated by CcmF and CcmH. In Pseudomonas fluorescens (strain ATCC BAA-477 / NRRL B-23932 / Pf-5), this protein is Cytochrome c-type biogenesis protein CcmE.